The following is a 244-amino-acid chain: Flagellar L-ring protein (244 aa).

Positions M1–A18 are cleaved as a signal peptide. C19 carries N-palmitoyl cysteine lipidation. A lipid anchor (S-diacylglycerol cysteine) is attached at C19.

It belongs to the FlgH family. As to quaternary structure, the basal body constitutes a major portion of the flagellar organelle and consists of four rings (L,P,S, and M) mounted on a central rod.

Its subcellular location is the cell outer membrane. The protein localises to the bacterial flagellum basal body. Its function is as follows. Assembles around the rod to form the L-ring and probably protects the motor/basal body from shearing forces during rotation. The polypeptide is Flagellar L-ring protein (Jannaschia sp. (strain CCS1)).